The sequence spans 430 residues: Divergent protein kinase domain 2A (430 aa).

A signal peptide spans M1–L35.

Belongs to the DIPK family.

The protein localises to the cytoplasmic vesicle. It is found in the COPI-coated vesicle. Its subcellular location is the golgi apparatus. The protein resides in the secreted. In terms of biological role, may play a role in cardiomyocyte proliferation through paracrine signaling and activation of the PPI3K-AKT-CDK7 signaling cascade. This Homo sapiens (Human) protein is Divergent protein kinase domain 2A.